The following is a 364-amino-acid chain: Monocarboxylate 2-oxoacid-binding periplasmic protein all3028 (364 aa).

Positions 1 to 26 (MKRREVLNTAAIATATTALVSCTQTN) are cleaved as a signal peptide. Residues 103–104 (YY), Q160, and R181 contribute to the substrate site. Q160 contributes to the Na(+) binding site. 3 residues coordinate Na(+): E218, W219, and E244.

It belongs to the bacterial solute-binding protein 7 family. In terms of assembly, homodimer. The complex comprises the extracytoplasmic solute receptor protein all3028, and the two putative transmembrane proteins alr3026 and alr3027.

The protein localises to the periplasm. Pyruvate uptake inhibited by 2-oxobutyrate, 2-oxovalerate, 2-oxoisovalerate, 2-oxoisocaproate and 2-oxo-3-methylvalerate. In terms of biological role, part of the tripartite ATP-independent periplasmic (TRAP) transport system involved in the uptake of monocarboxylate 2-oxoacids. This protein specifically binds monocarboxylate 2-oxoacids including pyruvate, 2-oxobutyrate, 2-oxovalerate, 2-oxoisovalerate, 2-oxoisocaproate and 2-oxo-3-methylvalerate. Is not able to bind mannitol. This is Monocarboxylate 2-oxoacid-binding periplasmic protein all3028 from Nostoc sp. (strain PCC 7120 / SAG 25.82 / UTEX 2576).